The sequence spans 271 residues: GPN-loop GTPase 3 (271 aa).

13-18 (GAGKST) lines the GTP pocket. The Gly-Pro-Asn (GPN)-loop; involved in dimer interface motif lies at 70-72 (GPN). 173–176 (SKLD) contacts GTP.

It belongs to the GPN-loop GTPase family. Heterodimers with GPN1 or GPN2. Binds to RNA polymerase II (RNAPII).

In terms of biological role, small GTPase required for proper nuclear import of RNA polymerase II and III (RNAPII and RNAPIII). May act at an RNAP assembly step prior to nuclear import. This chain is GPN-loop GTPase 3, found in Kluyveromyces lactis (strain ATCC 8585 / CBS 2359 / DSM 70799 / NBRC 1267 / NRRL Y-1140 / WM37) (Yeast).